The primary structure comprises 141 residues: Large ribosomal subunit protein uL11A (141 aa).

It belongs to the universal ribosomal protein uL11 family. Part of the ribosomal stalk of the 50S ribosomal subunit. Interacts with L10 and the large rRNA to form the base of the stalk. L10 forms an elongated spine to which L12 dimers bind in a sequential fashion forming a multimeric L10(L12)X complex. One or more lysine residues are methylated.

In terms of biological role, forms part of the ribosomal stalk which helps the ribosome interact with GTP-bound translation factors. This Halalkalibacterium halodurans (strain ATCC BAA-125 / DSM 18197 / FERM 7344 / JCM 9153 / C-125) (Bacillus halodurans) protein is Large ribosomal subunit protein uL11A.